Reading from the N-terminus, the 172-residue chain is Protein-export protein SecB (172 aa).

The interval 152–172 (AQGAEGGNSGIVMPDGSQARH) is disordered.

Belongs to the SecB family. As to quaternary structure, homotetramer, a dimer of dimers. One homotetramer interacts with 1 SecA dimer.

It localises to the cytoplasm. One of the proteins required for the normal export of preproteins out of the cell cytoplasm. It is a molecular chaperone that binds to a subset of precursor proteins, maintaining them in a translocation-competent state. It also specifically binds to its receptor SecA. The protein is Protein-export protein SecB of Cupriavidus necator (strain ATCC 17699 / DSM 428 / KCTC 22496 / NCIMB 10442 / H16 / Stanier 337) (Ralstonia eutropha).